An 83-amino-acid chain; its full sequence is Small cysteine-rich protein 3 (83 aa).

An N-terminal signal peptide occupies residues 1–21 (MGVKLNICLLLLLVAIISSQG). Residues 22–39 (FNLRKKEDSKDEKPFGNY) constitute a propeptide that is removed on maturation. The segment covering 25 to 35 (RKKEDSKDEKP) has biased composition (basic and acidic residues). A disordered region spans residues 25–44 (RKKEDSKDEKPFGNYRRGSP).

Belongs to the Cnidaria small cysteine-rich protein (SCRiP) family. alpha subfamily. In terms of processing, contains 4 disulfide bonds.

It is found in the secreted. The protein localises to the nematocyst. This recombinant protein induces severe neurotoxicity on zebrafish larvae (Danio rerio) at a concentration of 230 mg/ml, but does not show toxicity when injected in blowfly larvae (Sarcophaga falculata). All fish incubated with this protein died within 16 hours of exposure. Has also been claimed to be implied in calcification, but this function seems improbable. This is Small cysteine-rich protein 3 from Acropora millepora (Staghorn coral).